Consider the following 502-residue polypeptide: Glycerol kinase (502 aa).

ADP is bound at residue Thr14. Positions 14, 15, and 16 each coordinate ATP. Thr14 contacts sn-glycerol 3-phosphate. Arg18 contributes to the ADP binding site. 3 residues coordinate sn-glycerol 3-phosphate: Arg84, Glu85, and Tyr136. 3 residues coordinate glycerol: Arg84, Glu85, and Tyr136. His232 carries the post-translational modification Phosphohistidine; by HPr. Asp246 serves as a coordination point for sn-glycerol 3-phosphate. Asp246 and Gln247 together coordinate glycerol. ADP is bound by residues Thr268 and Gly311. ATP is bound by residues Thr268, Gly311, Gln315, and Gly412. 2 residues coordinate ADP: Gly412 and Asn416.

Belongs to the FGGY kinase family. In terms of assembly, homotetramer and homodimer (in equilibrium). Post-translationally, the phosphoenolpyruvate-dependent sugar phosphotransferase system (PTS), including enzyme I, and histidine-containing protein (HPr) are required for the phosphorylation, which leads to the activation of the enzyme.

The catalysed reaction is glycerol + ATP = sn-glycerol 3-phosphate + ADP + H(+). It functions in the pathway polyol metabolism; glycerol degradation via glycerol kinase pathway; sn-glycerol 3-phosphate from glycerol: step 1/1. With respect to regulation, activated by phosphorylation and inhibited by fructose 1,6-bisphosphate (FBP). Its function is as follows. Key enzyme in the regulation of glycerol uptake and metabolism. Catalyzes the phosphorylation of glycerol to yield sn-glycerol 3-phosphate. The protein is Glycerol kinase of Streptococcus pneumoniae (strain P1031).